The primary structure comprises 283 residues: Flagellar filament 35 kDa core protein (283 aa).

It belongs to the bacterial flagellin family. The flagellum consists of two outer layers around a core that contains several antigenically related polypeptides.

The protein localises to the periplasmic flagellum. It is found in the periplasm. Its function is as follows. Component of the core of the flagella. This chain is Flagellar filament 35 kDa core protein (flaB), found in Leptospira interrogans serogroup Icterohaemorrhagiae serovar copenhageni (strain Fiocruz L1-130).